Here is a 183-residue protein sequence, read N- to C-terminus: Streptavidin-V1 (183 aa).

Positions methionine 1–alanine 24 are cleaved as a signal peptide. An Avidin-like domain is found at alanine 37–proline 159. Tyrosine 67 and tyrosine 78 together coordinate biotin. The Cell attachment site; atypical motif lies at arginine 83–aspartate 85. Positions 116, 132, and 144 each coordinate biotin.

The protein belongs to the avidin/streptavidin family. In terms of assembly, homotetramer.

The protein resides in the secreted. The biological function of streptavidin is not known. Forms a strong non-covalent specific complex with biotin (one molecule of biotin per subunit of streptavidin). This Streptomyces violaceus (Streptomyces venezuelae) protein is Streptavidin-V1.